A 501-amino-acid polypeptide reads, in one-letter code: MPFGCVTLGDKKNYNQPSEVTDRYDLGQVIKTEEFCEIFRAKDKTTGKLHTCKKFQKRDGRKVRKAAKNEIGILKMVKHPNILQLVDVFVTRKEYFIFLELATGREVFDWILDQGYYSERDTSNVVRQVLEAVAYLHSLKIVHRNLKLENLVYYNRLKNSKIVISDFHLAKLENGLIKEPCGTPEYLAPEVVGRQRYGRPVDCWAIGVIMYILLSGNPPFYEEVEEDDYENHDKNLFRKILAGDYEFDSPYWDDISQAAKDLVTRLMEVEQDQRITAEEAISHEWISGNAASDKNIKDGVCAQIEKNFARAKWKKAVRVTTLMKRLRAPEQSSTAAAQSASATDTATPGAAGGATAAAASGATSAPEGDAARAAKSDNVAPADRSATPATDGSATPATDGSVTPATDGSITPATDGSVTPATDRSATPATDGRATPATEESTVPTTQSSAMLATKAAATPEPAMAQPDSTAPEGATGQAPPSSKGEEAAGYAQESQREEAS.

The 263-residue stretch at 24 to 286 (YDLGQVIKTE…AEEAISHEWI (263 aa)) folds into the Protein kinase domain. Residues 327-501 (RAPEQSSTAA…AQESQREEAS (175 aa)) are disordered. The segment covering 331 to 365 (QSSTAAAQSASATDTATPGAAGGATAAAASGATSA) has biased composition (low complexity). A compositionally biased stretch (polar residues) spans 387-428 (TPATDGSATPATDGSVTPATDGSITPATDGSVTPATDRSATP). At Thr-435 the chain carries Phosphothreonine. Residues 438–451 (TEESTVPTTQSSAM) show a composition bias toward polar residues. Thr-459 is subject to Phosphothreonine.

The protein belongs to the protein kinase superfamily. CAMK Ser/Thr protein kinase family. In terms of assembly, interacts with calmodulin, in the presence of calcium. Requires Ca(2+) as cofactor.

It is found in the cell membrane. Its subcellular location is the cytoplasmic vesicle membrane. Does not appear to have detectable kinase activity. This chain is CaM kinase-like vesicle-associated protein (CAMKV), found in Homo sapiens (Human).